The following is a 751-amino-acid chain: Lanosterol synthase erg7A (751 aa).

A disordered region spans residues 1 to 22 (MTGGPIASWRTAAQGHLTPDEN). One copy of the PFTB 1 repeat lies at 147 to 189 (ATEIKRYLFARQHPEDGGWGLHIEAHSSVFGTCMNYVALRLIG). The active-site Proton donor is the aspartate 481. PFTB repeat units follow at residues 508 to 553 (LKDS…MIGY), 585 to 625 (KDKA…ASVG), and 634 to 675 (ARRG…VQTA).

Belongs to the terpene cyclase/mutase family.

It localises to the lipid droplet. The protein resides in the endoplasmic reticulum membrane. It carries out the reaction (S)-2,3-epoxysqualene = lanosterol. The protein operates within steroid metabolism; ergosterol biosynthesis. Functionally, lanosterol synthase; part of the third module of ergosterol biosynthesis pathway that includes the late steps of the pathway. ERG7A and ERG7B catalyze the cyclization of (S)-2,3 oxidosqualene to lanosterol, a reaction that forms the sterol core. The third module or late pathway involves the ergosterol synthesis itself through consecutive reactions that mainly occur in the endoplasmic reticulum (ER) membrane. Firstly, the squalene synthase erg9 catalyzes the condensation of 2 farnesyl pyrophosphate moieties to form squalene, which is the precursor of all steroids. Squalene synthase is crucial for balancing the incorporation of farnesyl diphosphate (FPP) into sterol and nonsterol isoprene synthesis. Secondly, squalene is converted into lanosterol by the consecutive action of the squalene epoxidase erg1 and the lanosterol synthase erg7. Then, the delta(24)-sterol C-methyltransferase erg6 methylates lanosterol at C-24 to produce eburicol. Eburicol is the substrate of the sterol 14-alpha demethylase encoded by cyp51A and cyp51B, to yield 4,4,24-trimethyl ergosta-8,14,24(28)-trienol. The C-14 reductase erg24 then reduces the C14=C15 double bond which leads to 4,4-dimethylfecosterol. A sequence of further demethylations at C-4, involving the C-4 demethylation complex containing the C-4 methylsterol oxidases erg25A or erg25B, the sterol-4-alpha-carboxylate 3-dehydrogenase erg26 and the 3-keto-steroid reductase erg27, leads to the production of fecosterol via 4-methylfecosterol. The C-8 sterol isomerase erg2 then catalyzes the reaction which results in unsaturation at C-7 in the B ring of sterols and thus converts fecosterol to episterol. The sterol-C5-desaturase erg3B then catalyzes the introduction of a C-5 double bond in the B ring to produce 5-dehydroepisterol. The 2 other sterol-C5-desaturases, erg3A and erg3C, seem to be less important in ergosterol biosynthesis. The C-22 sterol desaturase erg5 further converts 5-dehydroepisterol into ergosta-5,7,22,24(28)-tetraen-3beta-ol by forming the C-22(23) double bond in the sterol side chain. Finally, ergosta-5,7,22,24(28)-tetraen-3beta-ol is substrate of the C-24(28) sterol reductases erg4A and erg4B to produce ergosterol. Possible alternative sterol biosynthetic pathways might exist from fecosterol to ergosterol, depending on the activities of the erg3 isoforms. In Aspergillus fumigatus (strain ATCC MYA-4609 / CBS 101355 / FGSC A1100 / Af293) (Neosartorya fumigata), this protein is Lanosterol synthase erg7A.